We begin with the raw amino-acid sequence, 480 residues long: MAGAGPAPGLPGAGGPVVPGPGAGIPGKSGEERLKEMEAEMALFEQEVLGAPVPGIPTAVPAVPTVPTVPTVEAMQVPAAPVIRPIIATNTYQQVQQTLEARAAAAATVVPPMVGGPPFVGPVGFGPGDRSHLDSPEAREAMFLRRAAVAPQRAPILRPAFVPHVLQRADSALSSAAAGPRPMALRPPHQALVGPPLPGPPGPPMMLPPMARAPGPPLGSMAALRPPLEEPAAPRELGLGLGLGLKEKEEAVVAAAAGLEEASAAVAVGAGGAPAGPAVIGPSLPLALAMPLPEPEPLPLPLEVVRGLLPPLRIPELLSLRPRPRPPRPEPPPGLMALEVPEPLGEDKKKGKPEKLKRCIRTAAGSSWEDPSLLEWDADDFRIFCGDLGNEVNDDILARAFSRFPSFLKAKVIRDKRTGKTKGYGFVSFKDPSDYVRAMREMNGKYVGSRPIKLRKSMWKDRNLDVVRKKQKEKKKLGLR.

The interval 1–30 (MAGAGPAPGLPGAGGPVVPGPGAGIPGKSG) is disordered. At A2 the chain carries N-acetylalanine. The segment covering 11–27 (PGAGGPVVPGPGAGIPG) has biased composition (gly residues). Position 135 is a phosphoserine (S135). Asymmetric dimethylarginine is present on residues R153, R158, R168, and R181. The interval 236 to 480 (ELGLGLGLGL…QKEKKKLGLR (245 aa)) is necessary for interaction with HNRNPK. The segment at 319–356 (SLRPRPRPPRPEPPPGLMALEVPEPLGEDKKKGKPEKL) is disordered. Positions 345–356 (GEDKKKGKPEKL) are enriched in basic and acidic residues. The RRM domain maps to 381–459 (FRIFCGDLGN…RPIKLRKSMW (79 aa)).

The protein belongs to the RRM RBM42 family. In terms of assembly, interacts with HNRNPK.

It localises to the nucleus. The protein resides in the cytoplasm. Functionally, binds (via the RRM domain) to the 3'-untranslated region (UTR) of CDKN1A mRNA. This Homo sapiens (Human) protein is RNA-binding protein 42 (RBM42).